We begin with the raw amino-acid sequence, 534 residues long: CTP synthase (534 aa).

The interval 1-267 (MTKYIFVTGG…DQIVCDHLKL (267 aa)) is amidoligase domain. Ser-13 contributes to the CTP binding site. Ser-13 contacts UTP. An ATP-binding site is contributed by 14 to 19 (SIGKGI). Tyr-54 is an L-glutamine binding site. Asp-71 contacts ATP. 2 residues coordinate Mg(2+): Asp-71 and Glu-141. Residues 148–150 (DIE), 188–193 (KTKPTQ), and Lys-224 contribute to the CTP site. UTP-binding positions include 188–193 (KTKPTQ) and Lys-224. Positions 292–534 (KIALVGKYVE…FVTAAVENAK (243 aa)) constitute a Glutamine amidotransferase type-1 domain. Residue Gly-354 coordinates L-glutamine. The Nucleophile; for glutamine hydrolysis role is filled by Cys-381. Residues 382–385 (LGMQ), Glu-405, and Arg-463 each bind L-glutamine. Catalysis depends on residues His-508 and Glu-510.

The protein belongs to the CTP synthase family. In terms of assembly, homotetramer.

The enzyme catalyses UTP + L-glutamine + ATP + H2O = CTP + L-glutamate + ADP + phosphate + 2 H(+). It catalyses the reaction L-glutamine + H2O = L-glutamate + NH4(+). It carries out the reaction UTP + NH4(+) + ATP = CTP + ADP + phosphate + 2 H(+). Its pathway is pyrimidine metabolism; CTP biosynthesis via de novo pathway; CTP from UDP: step 2/2. Allosterically activated by GTP, when glutamine is the substrate; GTP has no effect on the reaction when ammonia is the substrate. The allosteric effector GTP functions by stabilizing the protein conformation that binds the tetrahedral intermediate(s) formed during glutamine hydrolysis. Inhibited by the product CTP, via allosteric rather than competitive inhibition. Catalyzes the ATP-dependent amination of UTP to CTP with either L-glutamine or ammonia as the source of nitrogen. Regulates intracellular CTP levels through interactions with the four ribonucleotide triphosphates. This Streptococcus thermophilus (strain CNRZ 1066) protein is CTP synthase.